Here is a 129-residue protein sequence, read N- to C-terminus: Follitropin subunit beta (129 aa).

The first 20 residues, 1–20 (MKSVQFCFLFCCWRAICCRS), serve as a signal peptide directing secretion. 6 disulfides stabilise this stretch: Cys-21/Cys-69, Cys-35/Cys-84, Cys-38/Cys-122, Cys-46/Cys-100, Cys-50/Cys-102, and Cys-105/Cys-112. N-linked (GlcNAc...) asparagine glycosylation is found at Asn-25 and Asn-42.

The protein belongs to the glycoprotein hormones subunit beta family. As to quaternary structure, heterodimer. The active follitropin is a heterodimer composed of an alpha chain/CGA shared with other hormones and a unique beta chain/FSHB shown here.

The protein localises to the secreted. Its function is as follows. Together with the alpha chain CGA constitutes follitropin, the follicle-stimulating hormone, and provides its biological specificity to the hormone heterodimer. Binds FSHR, a G protein-coupled receptor, on target cells to activate downstream signaling pathways. Follitropin is involved in follicle development and spermatogenesis in reproductive organs. In Bubalus bubalis (Domestic water buffalo), this protein is Follitropin subunit beta (FSHB).